The chain runs to 1407 residues: DNA-directed RNA polymerase subunit beta' (1407 aa).

Residues C70, C72, C85, and C88 each coordinate Zn(2+). 3 residues coordinate Mg(2+): D458, D460, and D462. Zn(2+) is bound by residues C814, C888, C895, and C898.

This sequence belongs to the RNA polymerase beta' chain family. As to quaternary structure, the RNAP catalytic core consists of 2 alpha, 1 beta, 1 beta' and 1 omega subunit. When a sigma factor is associated with the core the holoenzyme is formed, which can initiate transcription. The cofactor is Mg(2+). It depends on Zn(2+) as a cofactor.

The catalysed reaction is RNA(n) + a ribonucleoside 5'-triphosphate = RNA(n+1) + diphosphate. In terms of biological role, DNA-dependent RNA polymerase catalyzes the transcription of DNA into RNA using the four ribonucleoside triphosphates as substrates. The protein is DNA-directed RNA polymerase subunit beta' of Leptothrix cholodnii (strain ATCC 51168 / LMG 8142 / SP-6) (Leptothrix discophora (strain SP-6)).